The primary structure comprises 328 residues: Ribosomal RNA small subunit methyltransferase H (328 aa).

S-adenosyl-L-methionine contacts are provided by residues 64-66 (GGH), Asp-83, Phe-112, Asp-129, and Gln-136.

Belongs to the methyltransferase superfamily. RsmH family.

It is found in the cytoplasm. It carries out the reaction cytidine(1402) in 16S rRNA + S-adenosyl-L-methionine = N(4)-methylcytidine(1402) in 16S rRNA + S-adenosyl-L-homocysteine + H(+). Functionally, specifically methylates the N4 position of cytidine in position 1402 (C1402) of 16S rRNA. In Bdellovibrio bacteriovorus (strain ATCC 15356 / DSM 50701 / NCIMB 9529 / HD100), this protein is Ribosomal RNA small subunit methyltransferase H.